We begin with the raw amino-acid sequence, 456 residues long: NADPH-ferredoxin reductase FprA (456 aa).

FAD contacts are provided by Ser-17, Glu-43, Leu-51, and Val-87. Residues Arg-113, 158 to 161 (NGNV), 202 to 203 (RR), and Glu-214 contribute to the NADP(+) site. FAD contacts are provided by residues Trp-362 and 369–371 (GVI). Gly-369 lines the NADP(+) pocket.

It belongs to the ferredoxin--NADP reductase type 1 family. As to quaternary structure, monomer. Requires FAD as cofactor.

It catalyses the reaction 2 reduced [2Fe-2S]-[ferredoxin] + NADP(+) + H(+) = 2 oxidized [2Fe-2S]-[ferredoxin] + NADPH. Functionally, may serve as electron transfer protein and supply electrons to P450 systems. The polypeptide is NADPH-ferredoxin reductase FprA (fprA) (Mycobacterium leprae (strain TN)).